A 546-amino-acid polypeptide reads, in one-letter code: MAKEIKFSDSARNLLFEGVRQLHDAVKVTMGPRGRNVLIQKSYGAPSITKDGVSVAKEIELSCPVANMGAQLVKEVASKTADAAGDGTTTATVLAYSIFKEGLRNITAGANPIEVKRGMDKAAEAIINELKKASKKVGGKEEITQVATISANSDHNIGKLIADAMEKVGKDGVITVEEAKGIEDELDVVEGMQFDRGYLSPYFVTNAEKMTAQLDNAYILLTDKKISSMKDILPLLEKTMKEGKPLLIIAEDIEGEALTTLVVNKLRGVLNIAAVKAPGFGDRRKEMLKDIAILTGGQVISEELGLSLENAEVEFLGKAGRIVIDKDNTTIVDGKGHSDDVKDRVAQIKTQIASTTSDYDKEKLQERLAKLSGGVAVIKVGAASEVEMKEKKDRVDDALSATKAAVEEGIVIGGGAALIRAAQKVHLNLHDDEKVGYEIIMRAIKAPLAQIAINAGYDGGVVVNEVQKHEGHFGFNASNGKYVDMFKEGIIDPLKVERIALQNAVSVSSLLLTTEATVHEIKEEKAAPAMPDMGGMGGMGGMGGMM.

ATP is bound by residues threonine 29–proline 32, lysine 50, aspartate 86–threonine 90, glycine 414, and aspartate 492.

It belongs to the chaperonin (HSP60) family. Forms a cylinder of 14 subunits composed of two heptameric rings stacked back-to-back. Interacts with the co-chaperonin GroES.

The protein localises to the cytoplasm. The catalysed reaction is ATP + H2O + a folded polypeptide = ADP + phosphate + an unfolded polypeptide.. In terms of biological role, together with its co-chaperonin GroES, plays an essential role in assisting protein folding. The GroEL-GroES system forms a nano-cage that allows encapsulation of the non-native substrate proteins and provides a physical environment optimized to promote and accelerate protein folding. The protein is Chaperonin GroEL of Helicobacter pylori (strain J99 / ATCC 700824) (Campylobacter pylori J99).